The sequence spans 545 residues: Methionine--tRNA ligase (545 aa).

A 'HIGH' region motif is present at residues 13–23 (PYANGPLHIGH). Zn(2+)-binding residues include C144, C147, C157, and C160. Positions 330–334 (KISKS) match the 'KMSKS' region motif. Residue K333 coordinates ATP.

It belongs to the class-I aminoacyl-tRNA synthetase family. MetG type 1 subfamily. In terms of assembly, monomer. Requires Zn(2+) as cofactor.

Its subcellular location is the cytoplasm. It catalyses the reaction tRNA(Met) + L-methionine + ATP = L-methionyl-tRNA(Met) + AMP + diphosphate. Its function is as follows. Is required not only for elongation of protein synthesis but also for the initiation of all mRNA translation through initiator tRNA(fMet) aminoacylation. This Blochmanniella floridana protein is Methionine--tRNA ligase.